We begin with the raw amino-acid sequence, 178 residues long: MILLKLYLTLAAILCQSRGTTSLDLDDLMTTNPEIQNEIINKHNDLRRTVDPPAKNTLKMSWDNTIAESAKRAALRCNQNEHTPVSGRTIGGVVCGENYFMSSNLRTWSFGIQSWFDERNYFKFGFGPTRAGVMVGHYTQVVWYKSYKMGCAINLCPNEPLKYFLVCQYCPGGNVVGR.

An N-terminal signal peptide occupies residues 1–22 (MILLKLYLTLAAILCQSRGTTS). Residues 41–169 (NKHNDLRRTV…PLKYFLVCQY (129 aa)) form the SCP domain. Disulfide bonds link Cys-77-Cys-156, Cys-95-Cys-170, and Cys-151-Cys-167.

Belongs to the CRISP family. Contains 8 disulfide bonds. As to expression, expressed by the venom gland.

It localises to the secreted. Blocks ryanodine receptors, and potassium channels. The chain is Cysteine-rich venom protein VAR3 from Varanus acanthurus (Ridge-tailed monitor).